We begin with the raw amino-acid sequence, 856 residues long: DNA mismatch repair protein MutS (856 aa).

609-616 (GPNMSGKS) lines the ATP pocket.

It belongs to the DNA mismatch repair MutS family.

Functionally, this protein is involved in the repair of mismatches in DNA. It is possible that it carries out the mismatch recognition step. This protein has a weak ATPase activity. This Finegoldia magna (strain ATCC 29328 / DSM 20472 / WAL 2508) (Peptostreptococcus magnus) protein is DNA mismatch repair protein MutS.